The chain runs to 525 residues: GMP synthase [glutamine-hydrolyzing] (525 aa).

The Glutamine amidotransferase type-1 domain occupies 16–205 (PVLVVDFGAQ…LHDFAGLGAD (190 aa)). Residue Cys93 is the Nucleophile of the active site. Catalysis depends on residues His179 and Glu181. Positions 206–399 (WTAANIAGVL…LGLPEEIVAR (194 aa)) constitute a GMPS ATP-PPase domain. 233 to 239 (SGGVDSA) is a binding site for ATP.

In terms of assembly, homodimer.

It catalyses the reaction XMP + L-glutamine + ATP + H2O = GMP + L-glutamate + AMP + diphosphate + 2 H(+). Its pathway is purine metabolism; GMP biosynthesis; GMP from XMP (L-Gln route): step 1/1. Functionally, catalyzes the synthesis of GMP from XMP. This chain is GMP synthase [glutamine-hydrolyzing], found in Mycolicibacterium paratuberculosis (strain ATCC BAA-968 / K-10) (Mycobacterium paratuberculosis).